Reading from the N-terminus, the 205-residue chain is Phosphoheptose isomerase (205 aa).

Residues 38-200 form the SIS domain; sequence LAVRLALGSK…LFEAVGELEP (163 aa). Substrate is bound at residue 53-55; it reads NGG. Zn(2+) contacts are provided by histidine 62 and glutamate 66. Substrate-binding positions include glutamate 66, 95–96, 121–123, serine 126, and glutamine 173; these read ND and STS. Zn(2+)-binding residues include glutamine 173 and histidine 181.

It belongs to the SIS family. GmhA subfamily. In terms of assembly, homotetramer. Requires Zn(2+) as cofactor.

The protein resides in the cytoplasm. The enzyme catalyses 2 D-sedoheptulose 7-phosphate = D-glycero-alpha-D-manno-heptose 7-phosphate + D-glycero-beta-D-manno-heptose 7-phosphate. Its pathway is carbohydrate biosynthesis; D-glycero-D-manno-heptose 7-phosphate biosynthesis; D-glycero-alpha-D-manno-heptose 7-phosphate and D-glycero-beta-D-manno-heptose 7-phosphate from sedoheptulose 7-phosphate: step 1/1. Functionally, catalyzes the isomerization of sedoheptulose 7-phosphate in D-glycero-D-manno-heptose 7-phosphate. In Maridesulfovibrio salexigens (strain ATCC 14822 / DSM 2638 / NCIMB 8403 / VKM B-1763) (Desulfovibrio salexigens), this protein is Phosphoheptose isomerase.